Reading from the N-terminus, the 211-residue chain is uncharacterized protein (211 aa).

This is an uncharacterized protein from Methanocaldococcus jannaschii (strain ATCC 43067 / DSM 2661 / JAL-1 / JCM 10045 / NBRC 100440) (Methanococcus jannaschii).